Here is a 355-residue protein sequence, read N- to C-terminus: Chorismate synthase (355 aa).

Residues Arg44 and Arg49 each contribute to the NADP(+) site. FMN is bound by residues 121–123 (HFS), Gly277, 292–296 (KPTPS), and Arg319.

This sequence belongs to the chorismate synthase family. Requires FMNH2 as cofactor.

It carries out the reaction 5-O-(1-carboxyvinyl)-3-phosphoshikimate = chorismate + phosphate. It functions in the pathway metabolic intermediate biosynthesis; chorismate biosynthesis; chorismate from D-erythrose 4-phosphate and phosphoenolpyruvate: step 7/7. Its function is as follows. Catalyzes the anti-1,4-elimination of the C-3 phosphate and the C-6 proR hydrogen from 5-enolpyruvylshikimate-3-phosphate (EPSP) to yield chorismate, which is the branch point compound that serves as the starting substrate for the three terminal pathways of aromatic amino acid biosynthesis. This reaction introduces a second double bond into the aromatic ring system. The polypeptide is Chorismate synthase (Thermococcus kodakarensis (strain ATCC BAA-918 / JCM 12380 / KOD1) (Pyrococcus kodakaraensis (strain KOD1))).